Consider the following 238-residue polypeptide: Sugar fermentation stimulation protein homolog (238 aa).

Belongs to the SfsA family.

This is Sugar fermentation stimulation protein homolog from Shewanella denitrificans (strain OS217 / ATCC BAA-1090 / DSM 15013).